Reading from the N-terminus, the 338-residue chain is RNA 3'-terminal phosphate cyclase (338 aa).

ATP is bound by residues glutamine 103 and 283–287 (YLADQ). The active-site Tele-AMP-histidine intermediate is histidine 308.

This sequence belongs to the RNA 3'-terminal cyclase family. Type 1 subfamily.

It is found in the cytoplasm. It carries out the reaction a 3'-end 3'-phospho-ribonucleotide-RNA + ATP = a 3'-end 2',3'-cyclophospho-ribonucleotide-RNA + AMP + diphosphate. Catalyzes the conversion of 3'-phosphate to a 2',3'-cyclic phosphodiester at the end of RNA. The mechanism of action of the enzyme occurs in 3 steps: (A) adenylation of the enzyme by ATP; (B) transfer of adenylate to an RNA-N3'P to produce RNA-N3'PP5'A; (C) and attack of the adjacent 2'-hydroxyl on the 3'-phosphorus in the diester linkage to produce the cyclic end product. The biological role of this enzyme is unknown but it is likely to function in some aspects of cellular RNA processing. The protein is RNA 3'-terminal phosphate cyclase of Escherichia coli O9:H4 (strain HS).